A 213-amino-acid polypeptide reads, in one-letter code: Heat shock protein 30C (213 aa).

The span at 61–80 (SKDTEMRRITDQNRQSRESE) shows a compositional bias: basic and acidic residues. Disordered stretches follow at residues 61 to 93 (SKDT…GKDH) and 174 to 213 (ALPP…QKVD). Positions 76–188 (SRESEGTSPN…PETPIPISMD (113 aa)) constitute a sHSP domain.

Belongs to the small heat shock protein (HSP20) family.

The chain is Heat shock protein 30C (hsp30c) from Xenopus laevis (African clawed frog).